A 185-amino-acid chain; its full sequence is HTH-type transcriptional regulator SAB2452 (185 aa).

The HTH tetR-type domain maps to 6–66 (IENRQRIEEI…YVIQRDLNTF (61 aa)). A DNA-binding region (H-T-H motif) is located at residues 29–48 (SMNRIAKELGIGMGTLYRHF).

The chain is HTH-type transcriptional regulator SAB2452 from Staphylococcus aureus (strain bovine RF122 / ET3-1).